A 460-amino-acid chain; its full sequence is MFS-type transporter PUL3 (460 aa).

The next 8 membrane-spanning stretches (helical) occupy residues 16–36 (AVTL…SSVV), 50–70 (YLFI…FIIG), 81–101 (WVII…SCAG), 113–133 (IICG…TAIS), 151–171 (GICM…DFTV), 181–201 (APTF…MFVL), 240–260 (MFLS…FLTL), and 271–291 (VAFM…PDLV). Residues 300–323 (PSTQDETDTSDNDKIEKEESEQKS) are disordered. Residues 310 to 323 (DNDKIEKEESEQKS) show a composition bias toward basic and acidic residues. Helical transmembrane passes span 333-353 (VSLT…MIGA), 369-389 (IFFT…GSSV), 408-428 (FIGA…AALY), and 433-453 (GLPI…PSLV).

It belongs to the major facilitator superfamily. TCR/Tet family.

The protein resides in the cell membrane. MFS-type transporer required for the uptake of iron via the uptake of the siderophore pulcherrimin-iron complex. The chain is MFS-type transporter PUL3 from Kluyveromyces lactis (strain ATCC 8585 / CBS 2359 / DSM 70799 / NBRC 1267 / NRRL Y-1140 / WM37) (Yeast).